A 147-amino-acid polypeptide reads, in one-letter code: D-aminoacyl-tRNA deacylase (147 aa).

Residues 136–137 (GP) carry the Gly-cisPro motif, important for rejection of L-amino acids motif.

This sequence belongs to the DTD family. As to quaternary structure, homodimer.

The protein resides in the cytoplasm. It catalyses the reaction glycyl-tRNA(Ala) + H2O = tRNA(Ala) + glycine + H(+). It carries out the reaction a D-aminoacyl-tRNA + H2O = a tRNA + a D-alpha-amino acid + H(+). An aminoacyl-tRNA editing enzyme that deacylates mischarged D-aminoacyl-tRNAs. Also deacylates mischarged glycyl-tRNA(Ala), protecting cells against glycine mischarging by AlaRS. Acts via tRNA-based rather than protein-based catalysis; rejects L-amino acids rather than detecting D-amino acids in the active site. By recycling D-aminoacyl-tRNA to D-amino acids and free tRNA molecules, this enzyme counteracts the toxicity associated with the formation of D-aminoacyl-tRNA entities in vivo and helps enforce protein L-homochirality. This Streptococcus agalactiae serotype Ia (strain ATCC 27591 / A909 / CDC SS700) protein is D-aminoacyl-tRNA deacylase.